A 477-amino-acid polypeptide reads, in one-letter code: Glycogen synthase (477 aa).

K15 lines the ADP-alpha-D-glucose pocket.

It belongs to the glycosyltransferase 1 family. Bacterial/plant glycogen synthase subfamily.

It catalyses the reaction [(1-&gt;4)-alpha-D-glucosyl](n) + ADP-alpha-D-glucose = [(1-&gt;4)-alpha-D-glucosyl](n+1) + ADP + H(+). It participates in glycan biosynthesis; glycogen biosynthesis. In terms of biological role, synthesizes alpha-1,4-glucan chains using ADP-glucose. The chain is Glycogen synthase from Cronobacter sakazakii (strain ATCC BAA-894) (Enterobacter sakazakii).